A 613-amino-acid chain; its full sequence is Dihydroxy-acid dehydratase (613 aa).

D81 lines the Mg(2+) pocket. C122 is a [2Fe-2S] cluster binding site. Residues D123 and K124 each coordinate Mg(2+). K124 is modified (N6-carboxylysine). Position 193 (C193) interacts with [2Fe-2S] cluster. Residue E489 participates in Mg(2+) binding. Catalysis depends on S515, which acts as the Proton acceptor.

The protein belongs to the IlvD/Edd family. As to quaternary structure, homodimer. Requires [2Fe-2S] cluster as cofactor. The cofactor is Mg(2+).

It carries out the reaction (2R)-2,3-dihydroxy-3-methylbutanoate = 3-methyl-2-oxobutanoate + H2O. The catalysed reaction is (2R,3R)-2,3-dihydroxy-3-methylpentanoate = (S)-3-methyl-2-oxopentanoate + H2O. It functions in the pathway amino-acid biosynthesis; L-isoleucine biosynthesis; L-isoleucine from 2-oxobutanoate: step 3/4. It participates in amino-acid biosynthesis; L-valine biosynthesis; L-valine from pyruvate: step 3/4. Functions in the biosynthesis of branched-chain amino acids. Catalyzes the dehydration of (2R,3R)-2,3-dihydroxy-3-methylpentanoate (2,3-dihydroxy-3-methylvalerate) into 2-oxo-3-methylpentanoate (2-oxo-3-methylvalerate) and of (2R)-2,3-dihydroxy-3-methylbutanoate (2,3-dihydroxyisovalerate) into 2-oxo-3-methylbutanoate (2-oxoisovalerate), the penultimate precursor to L-isoleucine and L-valine, respectively. This is Dihydroxy-acid dehydratase from Pseudomonas putida (strain ATCC 47054 / DSM 6125 / CFBP 8728 / NCIMB 11950 / KT2440).